A 123-amino-acid chain; its full sequence is WAP four-disulfide core domain protein 5 (123 aa).

An N-terminal signal peptide occupies residues 1-24 (MRIQSLLLLGALLAVGSQLPAVFG). WAP domains follow at residues 27–73 (KGEK…CVPR) and 74–121 (VSVK…RDPA). 8 disulfide bridges follow: Cys34-Cys62, Cys41-Cys66, Cys49-Cys61, Cys55-Cys70, Cys81-Cys109, Cys88-Cys113, Cys96-Cys108, and Cys102-Cys117.

The protein resides in the secreted. Putative acid-stable proteinase inhibitor. In Papio anubis (Olive baboon), this protein is WAP four-disulfide core domain protein 5 (WFDC5).